A 430-amino-acid chain; its full sequence is Serine--tRNA ligase (430 aa).

237–239 (TAE) is an L-serine binding site. An ATP-binding site is contributed by 268–270 (RSE). E291 lines the L-serine pocket. Residue 355–358 (EISS) coordinates ATP. S391 provides a ligand contact to L-serine.

The protein belongs to the class-II aminoacyl-tRNA synthetase family. Type-1 seryl-tRNA synthetase subfamily. In terms of assembly, homodimer. The tRNA molecule binds across the dimer.

The protein localises to the cytoplasm. It catalyses the reaction tRNA(Ser) + L-serine + ATP = L-seryl-tRNA(Ser) + AMP + diphosphate + H(+). It carries out the reaction tRNA(Sec) + L-serine + ATP = L-seryl-tRNA(Sec) + AMP + diphosphate + H(+). Its pathway is aminoacyl-tRNA biosynthesis; selenocysteinyl-tRNA(Sec) biosynthesis; L-seryl-tRNA(Sec) from L-serine and tRNA(Sec): step 1/1. Functionally, catalyzes the attachment of serine to tRNA(Ser). Is also able to aminoacylate tRNA(Sec) with serine, to form the misacylated tRNA L-seryl-tRNA(Sec), which will be further converted into selenocysteinyl-tRNA(Sec). The protein is Serine--tRNA ligase of Salmonella paratyphi C (strain RKS4594).